Here is a 949-residue protein sequence, read N- to C-terminus: MEMICVLFLSLVPAYSRGQGVYAPAQAQIIHAGQACVVKEDNISERVYTIREGDTLVLQCLVTGHPRPQVRWTKTAGSASDKFQETSVLNETLRIEKIQRLQGGRYYCKAENGVGVPAIRSIRVDVQYLDEPVLTVHQTISDVRGSFYQEKTVFLRCTVNSNPPARFIWKRGAETLSHSQDNGVDIYEPLYTQGETKVLKLKNLRPQDYASYTCQVSVRNVCSIPDKSITFQLTNTTAPPALKLSVNETLVVNPGDNVTMQCSLTGGDPQPEVLWSHSPGPLPPNSLVQGGNLTIWRIRVEDSGYYNCTAINNVGNPAKKTVNLLVRSMKNATFQITPDVIKESETIQLGQDLKLSCHVDAVPQEKVVYSWYKNGKPARFSDRLLITRNDPELPPVTCSLEIIDLRFSDYGTYLCVATFQGAPIPDLSVEVNISSETVPPTISVPKGQSTITVREGSRAELQCEVRGKPKPPIIWSRVDKETPMPSGTMTVETYDGKLRLESVSRDMSGTYKCQTARYNGFNIRPREALVQLNVQFPPVVEPAFQDVRQGMGRSVTLRCTMLKGSPMKVATSVWRFNGTLLAQPPAEQQDYSELKVDSVSRETSGSYECSISNDVGVSACLFQVSAKAYSPEFYYDTPNPTLSQKQSKNYSYILQWTQKEPDAVDPILKYRLEVRQLAQRNTIQTFIPVQKMEKGLLLEHILPNLKVPQSYEVRLTPITSFGAGDMAARIIRYMEPINYPSPTDNTCRFEDEKICGFVQDKMDNFDWTRQNALTQNPKRTVNTGPPTDISGTPEGYYMFIEASRPRVTGDKARLISPLYNITAKYYCVSFYYHMYGKHIGSLNLLVRVRNKRAIDTQVWSLSGNRGNMWQQAHVPINPPGPFQIIFEGVRGTSYEGDIAIDDVTLKKGDCPRKPIGPNKAVALPGSGVSAQHGPCLCGPLTFFLYVLLR.

A signal peptide spans 1–18 (MEMICVLFLSLVPAYSRG). Ig-like domains lie at 24–125 (PAQA…IRVD) and 132–230 (PVLT…KSIT). N-linked (GlcNAc...) asparagine glycans are attached at residues Asn-42 and Asn-90. Disulfide bonds link Cys-60–Cys-108 and Cys-157–Cys-214. 6 N-linked (GlcNAc...) asparagine glycosylation sites follow: Asn-235, Asn-247, Asn-257, Asn-292, Asn-307, and Asn-331. Positions 240–323 (PALKLSVNET…VGNPAKKTVN (84 aa)) constitute an Ig-like 3 domain. Cys-262 and Cys-308 are oxidised to a cystine. 3 consecutive Ig-like domains span residues 338-432 (PDVI…VEVN), 440-531 (PTIS…ALVQ), and 537-625 (PPVV…FQVS). Cys-357 and Cys-415 are joined by a disulfide. Asn-432 is a glycosylation site (N-linked (GlcNAc...) asparagine). 2 disulfides stabilise this stretch: Cys-463–Cys-513 and Cys-559–Cys-609. Residues Asn-577, Asn-649, and Asn-820 are each glycosylated (N-linked (GlcNAc...) asparagine). The 101-residue stretch at 637-737 (TPNPTLSQKQ…ARIIRYMEPI (101 aa)) folds into the Fibronectin type-III domain. Residues 745-912 (NTCRFEDEKI…VTLKKGDCPR (168 aa)) form the MAM domain. The GPI-anchor amidated serine moiety is linked to residue Ser-926. The propeptide at 927 to 949 (GVSAQHGPCLCGPLTFFLYVLLR) is removed in mature form.

As to quaternary structure, interacts heterophilically through its MAM domain with proteins in axon-rich regions and through its Ig-like domains with proteins in differentiating muscle. In terms of tissue distribution, in the embryonic brachial spinal cord, selectively expressed by medial lateral motor column neurons, some populations of dorsal root ganglion neurons, and interneurons.

It localises to the cell membrane. Required for radial migration of cortical neurons in the superficial layer of the neocortex. The polypeptide is MAM domain-containing glycosylphosphatidylinositol anchor protein 1 (Gallus gallus (Chicken)).